The sequence spans 203 residues: Small ribosomal subunit protein eS1 (203 aa).

The protein belongs to the eukaryotic ribosomal protein eS1 family.

This chain is Small ribosomal subunit protein eS1, found in Methanosarcina acetivorans (strain ATCC 35395 / DSM 2834 / JCM 12185 / C2A).